The primary structure comprises 382 residues: Intermediate transcription factor 3 large subunit (382 aa).

This sequence belongs to the poxviruses A23 family. In terms of assembly, heterodimer of a 45 kDa and a 32 kDa subunit.

In terms of biological role, acts with RNA polymerase to initiate transcription from intermediate gene promoters. This Ectromelia virus (strain Moscow) (ECTV) protein is Intermediate transcription factor 3 large subunit (VITF3L).